The following is a 705-amino-acid chain: Dolichyl-diphosphooligosaccharide--protein glycosyltransferase subunit STT3A (705 aa).

Residues 1–17 (MTKFGFLRLSYEKQDTL) are Cytoplasmic-facing. Residues 18-38 (LKLLILSMAAVLSFSTRLFAV) traverse the membrane as a helical segment. The Lumenal portion of the chain corresponds to 39–119 (LRFESVIHEF…IDIRNVCVFL (81 aa)). Residues 47 to 49 (EFD) carry the DXD motif 1 motif. Aspartate 49 contributes to the Mn(2+) binding site. The chain crosses the membrane as a helical span at residues 120–138 (APLFSSFTTIVTYHLTKEL). The Cytoplasmic portion of the chain corresponds to 139–140 (KD). A helical transmembrane segment spans residues 141 to 158 (AGAGLLAAAMIAVVPGYI). Over 159 to 169 (SRSVAGSYDNE) the chain is Lumenal. Mn(2+) is bound by residues aspartate 167 and glutamate 169. Positions 167–169 (DNE) match the DXD motif 2 motif. Residues 170–189 (GIAIFCMLLTYYMWIKAVKT) form a helical membrane-spanning segment. The Cytoplasmic portion of the chain corresponds to 190 to 191 (GS). A helical membrane pass occupies residues 192 to 206 (ICWAAKCALAYFYMV). The Lumenal segment spans residues 207 to 211 (SSWGG). Residues 212 to 228 (YVFLINLIPLHVLVLML) form a helical membrane-spanning segment. The Cytoplasmic portion of the chain corresponds to 229-233 (TGRFS). The helical transmembrane segment at 234–259 (HRIYVAYCTVYCLGTILSMQISFVGF) threads the bilayer. Residues 260–267 (QPVLSSEH) are Lumenal-facing. A helical transmembrane segment spans residues 268 to 287 (MAAFGVFGLCQIHAFVDYLR). Topologically, residues 288 to 300 (SKLNPQQFEVLFR) are cytoplasmic. A helical transmembrane segment spans residues 301–321 (SVISLVGFVLLTVGALLMLTG). Over 322-356 (KISPWTGRFYSLLDPSYAKNNIPIIASVSEHQPTT) the chain is Lumenal. The SVSE motif motif lies at 348-351 (SVSE). A helical membrane pass occupies residues 357–379 (WSSYYFDLQLLVFMFPVGLYYCF). Over 380-385 (SNLSDA) the chain is Cytoplasmic. Residues 386 to 402 (RIFIIMYGVTSMYFSAV) traverse the membrane as a helical segment. The Lumenal segment spans residues 403 to 406 (MVRL). Residue arginine 405 participates in dolichyl diphosphooligosaccharide binding. Residues 407–428 (MLVLAPVMCILSGIGVSQVLST) traverse the membrane as a helical segment. At 429 to 453 (YMKNLDISRPDKKSKKQQDSTYPIK) the chain is on the cytoplasmic side. Residues 454-473 (NEVASGMILVMAFFLITYTF) form a helical membrane-spanning segment. The Lumenal portion of the chain corresponds to 474-705 (HSTWVTSEAY…DLDNRGLSRT (232 aa)). Positions 525–527 (WWD) are interacts with target acceptor peptide in protein substrate. Positions 525-529 (WWDYG) match the WWDYG motif motif. Tyrosine 530 is a dolichyl diphosphooligosaccharide binding site. N-linked (GlcNAc...) asparagine glycosylation is found at asparagine 537 and asparagine 544. N-linked (GlcNAc...) (high mannose) asparagine glycosylation is present at asparagine 548. The DK motif motif lies at 592 to 599 (DINKFLWM).

Belongs to the STT3 family. In terms of assembly, component of the oligosaccharyltransferase (OST) complex. There are 2 OST complexes, OST-A and OST-B, which contain STT3A or STT3B as catalytic subunit, respectively. OST-A and OST-B contain common core subunits RPN1, RPN2, OST48, OST4, DAD1 and TMEM258, and OST-A contains DC2/OSTC and KRTCAP2/KCP2 specific accessory subunits. OST-A complex assembly occurs through the formation of 3 subcomplexes. Subcomplex 1 contains RPN1 and TMEM258, subcomplex 2 contains the OST-A-specific subunits STT3A, DC2/OSTC, and KCP2 as well as the core subunit OST4, and subcomplex 3 contains RPN2, DAD1, and OST48. The OST-A complex can form stable complexes with the Sec61 complex or with both the Sec61 and TRAP complexes. The cofactor is Mg(2+). Mn(2+) is required as a cofactor. As to expression, expressed at high levels in placenta, liver, muscle and pancreas, and at very low levels in brain, lung and kidney. Expressed in skin fibroblasts (at protein level).

It localises to the endoplasmic reticulum. Its subcellular location is the endoplasmic reticulum membrane. It catalyses the reaction a di-trans,poly-cis-dolichyl diphosphooligosaccharide + L-asparaginyl-[protein] = N(4)-(oligosaccharide-(1-&gt;4)-N-acetyl-beta-D-glucosaminyl-(1-&gt;4)-N-acetyl-beta-D-glucosaminyl)-L-asparaginyl-[protein] + a di-trans,poly-cis-dolichyl diphosphate + H(+). The protein operates within protein modification; protein glycosylation. Its activity is regulated as follows. STT3A, but not STT3B, is specifically inhibited by the N-glycosylation inhibitor NGI-235, which prevents productive binding pose of the glycan donor in the active site of STT3A. Its function is as follows. Catalytic subunit of the oligosaccharyl transferase (OST) complex that catalyzes the initial transfer of a defined glycan (Glc(3)Man(9)GlcNAc(2) in eukaryotes) from the lipid carrier dolichol-pyrophosphate to an asparagine residue within an Asn-X-Ser/Thr consensus motif in nascent polypeptide chains, the first step in protein N-glycosylation. N-glycosylation occurs cotranslationally and the complex associates with the Sec61 complex at the channel-forming translocon complex that mediates protein translocation across the endoplasmic reticulum (ER). All subunits are required for a maximal enzyme activity. This subunit contains the active site and the acceptor peptide and donor lipid-linked oligosaccharide (LLO) binding pockets. STT3A is present in the majority of OST complexes and mediates cotranslational N-glycosylation of most sites on target proteins, while STT3B-containing complexes are required for efficient post-translational glycosylation and mediate glycosylation of sites that have been skipped by STT3A. STT3A-containing OST-A complex is also required to prevent hyperglycosylation of some target proteins by preventing glycosylation of facultative sites before folding of target proteins is completed. This Homo sapiens (Human) protein is Dolichyl-diphosphooligosaccharide--protein glycosyltransferase subunit STT3A.